A 511-amino-acid polypeptide reads, in one-letter code: Pancreatic alpha-amylase (511 aa).

Residues 1–15 (MKLFLLLSAFGFCWA) form the signal peptide. Gln-16 carries the post-translational modification Pyrrolidone carboxylic acid. Disulfide bonds link Cys-43-Cys-101, Cys-85-Cys-130, and Cys-156-Cys-175. Asn-115, Arg-173, and Asp-182 together coordinate Ca(2+). Arg-210 contacts chloride. Asp-212 serves as the catalytic Nucleophile. His-216 contributes to the Ca(2+) binding site. The Proton donor role is filled by Glu-248. Residues Asn-313 and Arg-352 each coordinate chloride. Cys-393 and Cys-399 form a disulfide bridge. A glycan (N-linked (GlcNAc...) asparagine) is linked at Asn-427. A disulfide bridge links Cys-465 with Cys-477.

The protein belongs to the glycosyl hydrolase 13 family. Binds to the sea anemone inhibitor helianthamide and magnificamide. Ca(2+) is required as a cofactor. The cofactor is chloride.

It localises to the secreted. The protein localises to the extracellular space. The enzyme catalyses Endohydrolysis of (1-&gt;4)-alpha-D-glucosidic linkages in polysaccharides containing three or more (1-&gt;4)-alpha-linked D-glucose units.. The protein is Pancreatic alpha-amylase (AMY2) of Sus scrofa (Pig).